An 871-amino-acid chain; its full sequence is Pre-mRNA-processing factor 40 homolog B (871 aa).

WW domains are found at residues 92–125 (GPPR…KPSV) and 133–166 (LLSQ…RPKD). N6-acetyllysine is present on lysine 148. The disordered stretch occupies residues 171–277 (EVLVKQEAAG…RSGLSWSNRE (107 aa)). Lysine 175 is covalently cross-linked (Glycyl lysine isopeptide (Lys-Gly) (interchain with G-Cter in SUMO2)). Low complexity predominate over residues 182-191 (QQQQLPQTLQ). Positions 192–211 (PQPPQPQPDPPPVPPGPTPV) are enriched in pro residues. Composition is skewed to low complexity over residues 212–221 (PTGLLEPEPG) and 245–255 (EGPSSSGQHQP). 6 consecutive FF domains span residues 276–330 (REKA…YKAQ), 340–397 (RLRA…VLFF), 410–470 (RRRN…HIRA), 490–550 (QRKN…YVEE), 554–610 (RFHD…LLEK), and 625–682 (RMRR…FLQV). Positions 690 to 871 (HLHTKGRKHG…TLLQQLDDHQ (182 aa)) are disordered. The segment covering 691–711 (LHTKGRKHGRKGKKHHHKRSH) has biased composition (basic residues). Low complexity predominate over residues 739–756 (SESGSEPSSSLDSVESGG). Phosphoserine is present on serine 764. A compositionally biased stretch (basic residues) spans 777 to 793 (RKAKKPKKKTKKRRHKS). The span at 803-824 (EEKAGKESDEKEQEQDKDRELQ) shows a compositional bias: basic and acidic residues. Serine 832 carries the phosphoserine modification. Lysine 838 is covalently cross-linked (Glycyl lysine isopeptide (Lys-Gly) (interchain with G-Cter in SUMO2)). Phosphoserine is present on serine 852.

It belongs to the PRPF40 family. In terms of assembly, interacts with the N-terminus of HD. Expressed in the striatum and cortex of the brain (at protein level). Highly expressed in testis, fetal kidney and fetal brain. Moderately expressed in pancreas, skeletal muscle, placenta, brain and heart. Weakly expressed in colon, ileum, ovary, prostate, spleen, kidney and fetal lung.

The protein localises to the nucleus speckle. Functionally, may be involved in pre-mRNA splicing. The polypeptide is Pre-mRNA-processing factor 40 homolog B (PRPF40B) (Homo sapiens (Human)).